Consider the following 641-residue polypeptide: Threonine--tRNA ligase (641 aa).

The TGS domain occupies 1–61 (MPIITLPDGT…TQNSHIQIIT (61 aa)). Positions 242-533 (DHRKLGKKYS…LIENYSGNFP (292 aa)) are catalytic. Cys333, His384, and His510 together coordinate Zn(2+).

Belongs to the class-II aminoacyl-tRNA synthetase family. In terms of assembly, homodimer. It depends on Zn(2+) as a cofactor.

The protein localises to the cytoplasm. It catalyses the reaction tRNA(Thr) + L-threonine + ATP = L-threonyl-tRNA(Thr) + AMP + diphosphate + H(+). Catalyzes the attachment of threonine to tRNA(Thr) in a two-step reaction: L-threonine is first activated by ATP to form Thr-AMP and then transferred to the acceptor end of tRNA(Thr). Also edits incorrectly charged L-seryl-tRNA(Thr). The sequence is that of Threonine--tRNA ligase from Prochlorococcus marinus (strain NATL2A).